The sequence spans 318 residues: Probable cell division protein WhiA (318 aa).

The H-T-H motif DNA-binding region spans 281 to 314; it reads SLKELGQMLVPPVGKSGVNHRLRKIEEISKKLKE.

It belongs to the WhiA family.

Functionally, involved in cell division and chromosome segregation. This chain is Probable cell division protein WhiA, found in Thermoanaerobacter pseudethanolicus (strain ATCC 33223 / 39E) (Clostridium thermohydrosulfuricum).